The chain runs to 229 residues: Potassium/proton antiporter CemA (229 aa).

4 consecutive transmembrane segments (helical) span residues 7–27, 114–134, 154–174, and 189–209; these read FTPL…SLSF, IICF…LVIL, ILLL…ELMV, and IISG…KYWI.

This sequence belongs to the CemA family.

It localises to the plastid. The protein resides in the chloroplast inner membrane. It catalyses the reaction K(+)(in) + H(+)(out) = K(+)(out) + H(+)(in). Functionally, contributes to K(+)/H(+) antiport activity by supporting proton efflux to control proton extrusion and homeostasis in chloroplasts in a light-dependent manner to modulate photosynthesis. Prevents excessive induction of non-photochemical quenching (NPQ) under continuous-light conditions. Indirectly promotes efficient inorganic carbon uptake into chloroplasts. This is Potassium/proton antiporter CemA from Coffea arabica (Arabian coffee).